Consider the following 195-residue polypeptide: Interferon tau-11 (195 aa).

The first 23 residues, Met1 to Gly23, serve as a signal peptide directing secretion. 2 disulfides stabilise this stretch: Cys24–Cys122 and Cys52–Cys162. The N-linked (GlcNAc...) asparagine glycan is linked to Asn101.

This sequence belongs to the alpha/beta interferon family. IFN-alphaII subfamily. Constitutively and exclusively expressed in the mononuclear cells of the extraembryonic trophectoderm.

It localises to the secreted. Functionally, paracrine hormone primarily responsible for maternal recognition of pregnancy. Interacts with endometrial receptors, probably type I interferon receptors, and blocks estrogen receptor expression, preventing the estrogen-induced increase in oxytocin receptor expression in the endometrium. This results in the suppression of the pulsatile endometrial release of the luteolytic hormone prostaglandin F2-alpha, hindering the regression of the corpus luteum (luteolysis) and therefore a return to ovarian cyclicity. This, and a possible direct effect of IFN-tau on prostaglandin synthesis, leads in turn to continued ovarian progesterone secretion, which stimulates the secretion by the endometrium of the nutrients required for the growth of the conceptus. In summary, displays particularly high antiviral and antiproliferative potency concurrently with particular weak cytotoxicity, high antiluteolytic activity and immunomodulatory properties. In contrast with other IFNs, IFN-tau is not virally inducible. The polypeptide is Interferon tau-11 (IFNT11) (Ovis aries (Sheep)).